The following is a 145-amino-acid chain: D-aminoacyl-tRNA deacylase (145 aa).

The Gly-cisPro motif, important for rejection of L-amino acids signature appears at 137 to 138 (GP).

The protein belongs to the DTD family. As to quaternary structure, homodimer.

The protein resides in the cytoplasm. It carries out the reaction glycyl-tRNA(Ala) + H2O = tRNA(Ala) + glycine + H(+). The catalysed reaction is a D-aminoacyl-tRNA + H2O = a tRNA + a D-alpha-amino acid + H(+). An aminoacyl-tRNA editing enzyme that deacylates mischarged D-aminoacyl-tRNAs. Also deacylates mischarged glycyl-tRNA(Ala), protecting cells against glycine mischarging by AlaRS. Acts via tRNA-based rather than protein-based catalysis; rejects L-amino acids rather than detecting D-amino acids in the active site. By recycling D-aminoacyl-tRNA to D-amino acids and free tRNA molecules, this enzyme counteracts the toxicity associated with the formation of D-aminoacyl-tRNA entities in vivo and helps enforce protein L-homochirality. In Pseudomonas fluorescens (strain SBW25), this protein is D-aminoacyl-tRNA deacylase.